The following is a 335-amino-acid chain: Beta-ketoacyl-[acyl-carrier-protein] synthase III (335 aa).

Catalysis depends on residues cysteine 116 and histidine 256. The interval 257 to 261 (QANLR) is ACP-binding. Asparagine 286 is a catalytic residue.

This sequence belongs to the thiolase-like superfamily. FabH family. As to quaternary structure, homodimer.

It is found in the cytoplasm. The catalysed reaction is malonyl-[ACP] + acetyl-CoA + H(+) = 3-oxobutanoyl-[ACP] + CO2 + CoA. It functions in the pathway lipid metabolism; fatty acid biosynthesis. Functionally, catalyzes the condensation reaction of fatty acid synthesis by the addition to an acyl acceptor of two carbons from malonyl-ACP. Catalyzes the first condensation reaction which initiates fatty acid synthesis and may therefore play a role in governing the total rate of fatty acid production. Possesses both acetoacetyl-ACP synthase and acetyl transacylase activities. Its substrate specificity determines the biosynthesis of branched-chain and/or straight-chain of fatty acids. The chain is Beta-ketoacyl-[acyl-carrier-protein] synthase III from Porphyromonas gingivalis (strain ATCC BAA-308 / W83).